The sequence spans 313 residues: MIVVTGGAGFIGANIIHALNLRGETDILVVDDLTDGTRFRNLAELDVTDYMDKGEFLERVKANDLPMGIRAVFHEGACSDTTEWDGKFMMENNYTYSKVLLHWCLDRKVPFLYASSAAVYGASDEFREERECERPLNVYGYSKWQFDQYVRKILPSARSQIVGFRYFNVYGPREQHKGKMASVAYHLHEQIKAGQNPKLFEGWDGYSDGGQQRDFVYVDDVCKVNLWFYDNPEQSGIFNLGTGRAQSFLDVAQAVIRYHGKGSVEFIPFPDELKGRYQSFTQADITALRDVGYTAEFADVASGVESYLAWLDR.

Residues Phe-10–Ile-11, Asp-31–Asp-32, Arg-38, Lys-53, Glu-75–Ser-79, and Asn-92 each bind NADP(+). Tyr-139 functions as the Proton acceptor in the catalytic mechanism. An NADP(+)-binding site is contributed by Lys-143. Residue Asn-168 coordinates substrate. Residues Val-169 and Lys-177 each contribute to the NADP(+) site. The Proton acceptor role is filled by Lys-177. Substrate is bound by residues Lys-179, His-186, Phe-200 to Trp-203, Arg-213, and Tyr-277.

It belongs to the NAD(P)-dependent epimerase/dehydratase family. HldD subfamily. As to quaternary structure, homopentamer. NADP(+) is required as a cofactor.

It carries out the reaction ADP-D-glycero-beta-D-manno-heptose = ADP-L-glycero-beta-D-manno-heptose. It participates in nucleotide-sugar biosynthesis; ADP-L-glycero-beta-D-manno-heptose biosynthesis; ADP-L-glycero-beta-D-manno-heptose from D-glycero-beta-D-manno-heptose 7-phosphate: step 4/4. Its function is as follows. Catalyzes the interconversion between ADP-D-glycero-beta-D-manno-heptose and ADP-L-glycero-beta-D-manno-heptose via an epimerization at carbon 6 of the heptose. The protein is ADP-L-glycero-D-manno-heptose-6-epimerase of Marinobacter nauticus (strain ATCC 700491 / DSM 11845 / VT8) (Marinobacter aquaeolei).